The chain runs to 202 residues: Putative 5'(3')-deoxyribonucleotidase (202 aa).

Asp-22 acts as the Nucleophile in catalysis. 3 residues coordinate Mg(2+): Asp-22, Asp-24, and Asp-156. The active-site Proton donor is Asp-24.

It belongs to the 5'(3')-deoxyribonucleotidase family. The cofactor is Mg(2+).

Functionally, dephosphorylates the 5' and 2'(3')-phosphates of deoxyribonucleotides. The polypeptide is Putative 5'(3')-deoxyribonucleotidase (Chlorobaculum tepidum (strain ATCC 49652 / DSM 12025 / NBRC 103806 / TLS) (Chlorobium tepidum)).